The sequence spans 438 residues: Keratin, type I cytoskeletal 18 (438 aa).

Positions 4-83 (AVSSRSTVVS…TLSGNAVISN (80 aa)) are head. Residues 84–119 (EKETMQDLNDRLSNYLETVRRLENANQQLEIQIREA) form a coil 1A region. One can recognise an IF rod domain in the interval 84–395 (EKETMQDLND…HLLGGEDSDT (312 aa)). Residues 120–136 (MEKRGPSVRDYSNYEKI) are linker 1. The coil 1B stretch occupies residues 137-228 (IKELRDQIYD…KNHEDEVIAL (92 aa)). Positions 229–252 (RNQVNSCGVQVDLDAPKGTDLAEI) are linker 12. The segment at 253-393 (MATLRAEYEA…YRHLLGGEDS (141 aa)) is coil 2. The segment at 394–438 (DTLSLQDALSAMKVSNVQTVQKIVVTTQKLVDGKVVEDSTVTETK) is tail.

Belongs to the intermediate filament family. In terms of assembly, heterotetramer of two type I and two type II keratins. Keratin-18 associates with keratin-8. Phosphorylated. In terms of processing, proteolytically cleaved by caspases during epithelial cell apoptosis. As to expression, expressed at low levels in skin.

In terms of biological role, when phosphorylated, plays a role in filament reorganization. This chain is Keratin, type I cytoskeletal 18, found in Protopterus aethiopicus (Marbled lungfish).